An 84-amino-acid chain; its full sequence is U21-theraphotoxin-Cg1a 2 (84 aa).

The first 21 residues, 1–21 (MKVSVLITLAVLGVMFLFTSA), serve as a signal peptide directing secretion. Positions 22–47 (EERGSDQMDSPAWLKSMEIIFQSEER) are excised as a propeptide. 3 disulfide bridges follow: C49-C63, C56-C68, and C62-C76. V82 carries the post-translational modification Valine amide.

It belongs to the neurotoxin 10 (Hwtx-1) family. 05 (F4a) subfamily. As to expression, expressed by the venom gland.

The protein localises to the secreted. In terms of biological role, probable ion channel inhibitor. The chain is U21-theraphotoxin-Cg1a 2 from Chilobrachys guangxiensis (Chinese earth tiger tarantula).